Reading from the N-terminus, the 227-residue chain is Ribosomal RNA large subunit methyltransferase E (227 aa).

5 residues coordinate S-adenosyl-L-methionine: glycine 78, tryptophan 80, aspartate 103, aspartate 119, and aspartate 143. The active-site Proton acceptor is lysine 183.

This sequence belongs to the class I-like SAM-binding methyltransferase superfamily. RNA methyltransferase RlmE family.

The protein localises to the cytoplasm. The catalysed reaction is uridine(2552) in 23S rRNA + S-adenosyl-L-methionine = 2'-O-methyluridine(2552) in 23S rRNA + S-adenosyl-L-homocysteine + H(+). Its function is as follows. Specifically methylates the uridine in position 2552 of 23S rRNA at the 2'-O position of the ribose in the fully assembled 50S ribosomal subunit. This is Ribosomal RNA large subunit methyltransferase E from Rickettsia peacockii (strain Rustic).